The following is a 369-amino-acid chain: Anthranilate phosphoribosyltransferase (369 aa).

5-phospho-alpha-D-ribose 1-diphosphate-binding positions include Gly111, 114 to 115, Thr119, 121 to 124, 139 to 147, and Ser151; these read GD, NIST, and KHGNRGVSS. Gly111 lines the anthranilate pocket. Mg(2+) is bound at residue Ser123. Residue Asn142 coordinates anthranilate. Arg197 is a binding site for anthranilate. Mg(2+)-binding residues include Asp256 and Glu257.

It belongs to the anthranilate phosphoribosyltransferase family. Homodimer. Requires Mg(2+) as cofactor.

It carries out the reaction N-(5-phospho-beta-D-ribosyl)anthranilate + diphosphate = 5-phospho-alpha-D-ribose 1-diphosphate + anthranilate. The protein operates within amino-acid biosynthesis; L-tryptophan biosynthesis; L-tryptophan from chorismate: step 2/5. In terms of biological role, catalyzes the transfer of the phosphoribosyl group of 5-phosphorylribose-1-pyrophosphate (PRPP) to anthranilate to yield N-(5'-phosphoribosyl)-anthranilate (PRA). This is Anthranilate phosphoribosyltransferase from Cupriavidus pinatubonensis (strain JMP 134 / LMG 1197) (Cupriavidus necator (strain JMP 134)).